The chain runs to 37 residues: Cytochrome b6-f complex subunit 5 (37 aa).

A helical transmembrane segment spans residues 5–25 (LLSGIVLGLMPVTLAGLFTTA).

Belongs to the PetG family. The 4 large subunits of the cytochrome b6-f complex are cytochrome b6, subunit IV (17 kDa polypeptide, PetD), cytochrome f and the Rieske protein, while the 4 small subunits are PetG, PetL, PetM and PetN. The complex functions as a dimer.

The protein localises to the plastid. It localises to the chloroplast thylakoid membrane. Component of the cytochrome b6-f complex, which mediates electron transfer between photosystem II (PSII) and photosystem I (PSI), cyclic electron flow around PSI, and state transitions. PetG is required for either the stability or assembly of the cytochrome b6-f complex. The polypeptide is Cytochrome b6-f complex subunit 5 (Ostreococcus tauri).